The chain runs to 395 residues: Lipid-A-disaccharide synthase (395 aa).

It belongs to the LpxB family.

The catalysed reaction is a lipid X + a UDP-2-N,3-O-bis[(3R)-3-hydroxyacyl]-alpha-D-glucosamine = a lipid A disaccharide + UDP + H(+). It participates in bacterial outer membrane biogenesis; LPS lipid A biosynthesis. In terms of biological role, condensation of UDP-2,3-diacylglucosamine and 2,3-diacylglucosamine-1-phosphate to form lipid A disaccharide, a precursor of lipid A, a phosphorylated glycolipid that anchors the lipopolysaccharide to the outer membrane of the cell. The polypeptide is Lipid-A-disaccharide synthase (Bordetella avium (strain 197N)).